An 88-amino-acid chain; its full sequence is Small ribosomal subunit protein uS17 (88 aa).

Belongs to the universal ribosomal protein uS17 family. As to quaternary structure, part of the 30S ribosomal subunit.

Functionally, one of the primary rRNA binding proteins, it binds specifically to the 5'-end of 16S ribosomal RNA. The chain is Small ribosomal subunit protein uS17 from Lawsonia intracellularis (strain PHE/MN1-00).